A 211-amino-acid polypeptide reads, in one-letter code: Uracil phosphoribosyltransferase (211 aa).

5-phospho-alpha-D-ribose 1-diphosphate contacts are provided by residues arginine 78, arginine 103, and 130 to 138 (DPMLATGGT). Residues isoleucine 195 and 200-202 (GDA) contribute to the uracil site. Residue aspartate 201 participates in 5-phospho-alpha-D-ribose 1-diphosphate binding.

Belongs to the UPRTase family. It depends on Mg(2+) as a cofactor.

It catalyses the reaction UMP + diphosphate = 5-phospho-alpha-D-ribose 1-diphosphate + uracil. Its pathway is pyrimidine metabolism; UMP biosynthesis via salvage pathway; UMP from uracil: step 1/1. Allosterically activated by GTP. Functionally, catalyzes the conversion of uracil and 5-phospho-alpha-D-ribose 1-diphosphate (PRPP) to UMP and diphosphate. The chain is Uracil phosphoribosyltransferase from Kocuria rhizophila (strain ATCC 9341 / DSM 348 / NBRC 103217 / DC2201).